The primary structure comprises 676 residues: UvrABC system protein C (676 aa).

The region spanning 16 to 95 is the GIY-YIG domain; sequence VEPGVYRFRD…IKEFDPRFNI (80 aa). The UVR domain maps to 208–243; that stretch reads DRLVRDLERKMTAAAEDLDFERAARLRDDIGALRRA.

Belongs to the UvrC family. As to quaternary structure, interacts with UvrB in an incision complex.

It localises to the cytoplasm. Its function is as follows. The UvrABC repair system catalyzes the recognition and processing of DNA lesions. UvrC both incises the 5' and 3' sides of the lesion. The N-terminal half is responsible for the 3' incision and the C-terminal half is responsible for the 5' incision. The polypeptide is UvrABC system protein C (Mycobacterium sp. (strain JLS)).